We begin with the raw amino-acid sequence, 469 residues long: Probable ribonuclease FAU-1 (469 aa).

Belongs to the FAU-1 family.

Its function is as follows. Probable RNase involved in rRNA stability through maturation and/or degradation of precursor rRNAs. Binds to RNA in loop regions with AU-rich sequences. This Pyrococcus abyssi (strain GE5 / Orsay) protein is Probable ribonuclease FAU-1.